The primary structure comprises 379 residues: 1-deoxy-D-xylulose 5-phosphate reductoisomerase (379 aa).

NADPH-binding residues include Thr10, Gly11, Ser12, Ile13, Arg38, Asn39, and Asn121. Position 122 (Lys122) interacts with 1-deoxy-D-xylulose 5-phosphate. Glu123 is an NADPH binding site. Asp147 lines the Mn(2+) pocket. Ser148, Glu149, Ser173, and His196 together coordinate 1-deoxy-D-xylulose 5-phosphate. Glu149 is a binding site for Mn(2+). NADPH is bound at residue Gly202. 1-deoxy-D-xylulose 5-phosphate is bound by residues Ser209, Asn214, Lys215, and Glu218. Glu218 is a Mn(2+) binding site.

It belongs to the DXR family. Mg(2+) is required as a cofactor. It depends on Mn(2+) as a cofactor.

The catalysed reaction is 2-C-methyl-D-erythritol 4-phosphate + NADP(+) = 1-deoxy-D-xylulose 5-phosphate + NADPH + H(+). It functions in the pathway isoprenoid biosynthesis; isopentenyl diphosphate biosynthesis via DXP pathway; isopentenyl diphosphate from 1-deoxy-D-xylulose 5-phosphate: step 1/6. In terms of biological role, catalyzes the NADPH-dependent rearrangement and reduction of 1-deoxy-D-xylulose-5-phosphate (DXP) to 2-C-methyl-D-erythritol 4-phosphate (MEP). This chain is 1-deoxy-D-xylulose 5-phosphate reductoisomerase, found in Chlamydia trachomatis serovar A (strain ATCC VR-571B / DSM 19440 / HAR-13).